The sequence spans 842 residues: Leucine--tRNA ligase (842 aa).

A 'HIGH' region motif is present at residues proline 44–histidine 55. The 'KMSKS' region motif lies at lysine 619–serine 623. Lysine 622 lines the ATP pocket.

Belongs to the class-I aminoacyl-tRNA synthetase family.

Its subcellular location is the cytoplasm. The catalysed reaction is tRNA(Leu) + L-leucine + ATP = L-leucyl-tRNA(Leu) + AMP + diphosphate. The sequence is that of Leucine--tRNA ligase from Borrelia recurrentis (strain A1).